We begin with the raw amino-acid sequence, 306 residues long: Glutaminase (306 aa).

Substrate contacts are provided by serine 61, asparagine 111, glutamate 155, asparagine 162, tyrosine 186, tyrosine 238, and valine 256.

This sequence belongs to the glutaminase family. As to quaternary structure, homotetramer.

The enzyme catalyses L-glutamine + H2O = L-glutamate + NH4(+). This Pseudomonas entomophila (strain L48) protein is Glutaminase.